Reading from the N-terminus, the 195-residue chain is Imidazoleglycerol-phosphate dehydratase (195 aa).

Belongs to the imidazoleglycerol-phosphate dehydratase family.

Its subcellular location is the cytoplasm. It carries out the reaction D-erythro-1-(imidazol-4-yl)glycerol 3-phosphate = 3-(imidazol-4-yl)-2-oxopropyl phosphate + H2O. It functions in the pathway amino-acid biosynthesis; L-histidine biosynthesis; L-histidine from 5-phospho-alpha-D-ribose 1-diphosphate: step 6/9. The sequence is that of Imidazoleglycerol-phosphate dehydratase from Dechloromonas aromatica (strain RCB).